Here is a 63-residue protein sequence, read N- to C-terminus: Small ribosomal subunit protein eS17 (63 aa).

This sequence belongs to the eukaryotic ribosomal protein eS17 family.

The chain is Small ribosomal subunit protein eS17 from Methanococcus vannielii (strain ATCC 35089 / DSM 1224 / JCM 13029 / OCM 148 / SB).